A 408-amino-acid chain; its full sequence is Peptidase T (408 aa).

Zn(2+) is bound at residue H78. The active site involves D80. D141 lines the Zn(2+) pocket. E175 acts as the Proton acceptor in catalysis. The Zn(2+) site is built by E176, D198, and H380.

Belongs to the peptidase M20B family. Zn(2+) serves as cofactor.

Its subcellular location is the cytoplasm. The catalysed reaction is Release of the N-terminal residue from a tripeptide.. Functionally, cleaves the N-terminal amino acid of tripeptides. The polypeptide is Peptidase T (Halothermothrix orenii (strain H 168 / OCM 544 / DSM 9562)).